The following is a 605-amino-acid chain: Isocitrate dehydrogenase kinase/phosphatase (605 aa).

ATP is bound by residues 327-333 and K348; that span reads APGIKGL. The active site involves D383.

Belongs to the AceK family.

The protein localises to the cytoplasm. It catalyses the reaction L-seryl-[isocitrate dehydrogenase] + ATP = O-phospho-L-seryl-[isocitrate dehydrogenase] + ADP + H(+). Bifunctional enzyme which can phosphorylate or dephosphorylate isocitrate dehydrogenase (IDH) on a specific serine residue. This is a regulatory mechanism which enables bacteria to bypass the Krebs cycle via the glyoxylate shunt in response to the source of carbon. When bacteria are grown on glucose, IDH is fully active and unphosphorylated, but when grown on acetate or ethanol, the activity of IDH declines drastically concomitant with its phosphorylation. In Burkholderia orbicola (strain MC0-3), this protein is Isocitrate dehydrogenase kinase/phosphatase.